A 289-amino-acid chain; its full sequence is Shikimate dehydrogenase (NADP(+)) (289 aa).

Shikimate contacts are provided by residues 19 to 21 (SLS) and threonine 66. The active-site Proton acceptor is lysine 70. 2 residues coordinate shikimate: asparagine 91 and aspartate 106. Residues 131–135 (GNGGA) and leucine 229 each bind NADP(+). Tyrosine 231 contacts shikimate. Glycine 252 lines the NADP(+) pocket.

This sequence belongs to the shikimate dehydrogenase family. As to quaternary structure, homodimer.

The enzyme catalyses shikimate + NADP(+) = 3-dehydroshikimate + NADPH + H(+). It participates in metabolic intermediate biosynthesis; chorismate biosynthesis; chorismate from D-erythrose 4-phosphate and phosphoenolpyruvate: step 4/7. Its function is as follows. Involved in the biosynthesis of the chorismate, which leads to the biosynthesis of aromatic amino acids. Catalyzes the reversible NADPH linked reduction of 3-dehydroshikimate (DHSA) to yield shikimate (SA). This is Shikimate dehydrogenase (NADP(+)) from Nostoc sp. (strain PCC 7120 / SAG 25.82 / UTEX 2576).